Reading from the N-terminus, the 261-residue chain is Thiamine thiazole synthase (261 aa).

NAD(+) contacts are provided by residues Ala-33, 52–53, Gly-60, Val-124, and 152–154; these read ER and HVD. Asp-154 and His-169 together coordinate Fe cation. Ile-219 contributes to the NAD(+) binding site. Arg-229 contributes to the glycine binding site.

It belongs to the THI4 family. As to quaternary structure, homooctamer; tetramer of dimers. The cofactor is Fe(2+).

The enzyme catalyses hydrogen sulfide + glycine + NAD(+) = ADP-5-ethyl-4-methylthiazole-2-carboxylate + nicotinamide + 3 H2O + H(+). Its pathway is cofactor biosynthesis; thiamine diphosphate biosynthesis. In terms of biological role, involved in the biosynthesis of the thiazole moiety of thiamine. Catalyzes the conversion of NAD and glycine to adenosine diphosphate 5-(2-hydroxyethyl)-4-methylthiazole-2-carboxylate (ADT), an adenylated thiazole intermediate, using free sulfide as a source of sulfur. The polypeptide is Thiamine thiazole synthase (Pyrobaculum aerophilum (strain ATCC 51768 / DSM 7523 / JCM 9630 / CIP 104966 / NBRC 100827 / IM2)).